The following is a 421-amino-acid chain: MPLVEINFDGLVGPSHNYAGLSLGNLASASNAGEVSYPRAAALQGLGKMRHNLALGLTQGLFAPLPRPNPVFLGALGLNAIDEVDQAQRRLRAAAWSASSMWTANAATVSPAPDTPDGRCHLTAANLVTMPHRSQEWPDTVRQLRLAFADAAHFAVHDAVPACFGDEGAANHMRMCKSHDAPGIEIFVYGTTGGAFPARQHEQASRAVARLHGLAPERCLFVEQAPEAIAAGAFHNDVVAVANERVLFTHEQAFANPEATYAAIRERLPEAEIVVVPSSVVSLADAIRSYLFNAQLLTLPSGEMGLVIPVEAWETPSVRGWLEAHLASNGPIRRVLPVDVRQSMANGGGPACLRLRVVADPATVDPRFLLDEARVAIVEEVVRRHWPEQIDPADLGSDILAQTVHGARGALLAALELSELA.

Substrate contacts are provided by residues 19–28 (AGLSLGNLAS), Asn-105, and 132–133 (HR). Residue Glu-167 is part of the active site. A substrate-binding site is contributed by Arg-199. The active site involves His-235. Substrate contacts are provided by Asp-237 and Asn-346. Cys-352 (nucleophile) is an active-site residue.

This sequence belongs to the succinylarginine dihydrolase family. As to quaternary structure, homodimer.

It carries out the reaction N(2)-succinyl-L-arginine + 2 H2O + 2 H(+) = N(2)-succinyl-L-ornithine + 2 NH4(+) + CO2. It participates in amino-acid degradation; L-arginine degradation via AST pathway; L-glutamate and succinate from L-arginine: step 2/5. Its function is as follows. Catalyzes the hydrolysis of N(2)-succinylarginine into N(2)-succinylornithine, ammonia and CO(2). In Novosphingobium aromaticivorans (strain ATCC 700278 / DSM 12444 / CCUG 56034 / CIP 105152 / NBRC 16084 / F199), this protein is N-succinylarginine dihydrolase.